The primary structure comprises 201 residues: FMN-dependent NADH:quinone oxidoreductase (201 aa).

FMN is bound by residues Ser10, 16 to 18 (SQS), 96 to 99 (MYNF), and 140 to 143 (SRGG).

This sequence belongs to the azoreductase type 1 family. Homodimer. Requires FMN as cofactor.

It catalyses the reaction 2 a quinone + NADH + H(+) = 2 a 1,4-benzosemiquinone + NAD(+). The catalysed reaction is N,N-dimethyl-1,4-phenylenediamine + anthranilate + 2 NAD(+) = 2-(4-dimethylaminophenyl)diazenylbenzoate + 2 NADH + 2 H(+). Quinone reductase that provides resistance to thiol-specific stress caused by electrophilic quinones. Its function is as follows. Also exhibits azoreductase activity. Catalyzes the reductive cleavage of the azo bond in aromatic azo compounds to the corresponding amines. In Yersinia enterocolitica serotype O:8 / biotype 1B (strain NCTC 13174 / 8081), this protein is FMN-dependent NADH:quinone oxidoreductase.